Here is a 610-residue protein sequence, read N- to C-terminus: Elongation factor 4 (610 aa).

A tr-type G domain is found at 14 to 196 (NRIRNFSIIA…ALVANIPPPK (183 aa)). GTP contacts are provided by residues 26-31 (DHGKST) and 143-146 (NKID).

Belongs to the TRAFAC class translation factor GTPase superfamily. Classic translation factor GTPase family. LepA subfamily.

It localises to the cell inner membrane. It catalyses the reaction GTP + H2O = GDP + phosphate + H(+). In terms of biological role, required for accurate and efficient protein synthesis under certain stress conditions. May act as a fidelity factor of the translation reaction, by catalyzing a one-codon backward translocation of tRNAs on improperly translocated ribosomes. Back-translocation proceeds from a post-translocation (POST) complex to a pre-translocation (PRE) complex, thus giving elongation factor G a second chance to translocate the tRNAs correctly. Binds to ribosomes in a GTP-dependent manner. The chain is Elongation factor 4 from Legionella pneumophila (strain Lens).